The following is a 337-amino-acid chain: Phosphate acyltransferase (337 aa).

Belongs to the PlsX family. Homodimer. Probably interacts with PlsY.

The protein resides in the cytoplasm. It catalyses the reaction a fatty acyl-[ACP] + phosphate = an acyl phosphate + holo-[ACP]. The protein operates within lipid metabolism; phospholipid metabolism. Its function is as follows. Catalyzes the reversible formation of acyl-phosphate (acyl-PO(4)) from acyl-[acyl-carrier-protein] (acyl-ACP). This enzyme utilizes acyl-ACP as fatty acyl donor, but not acyl-CoA. This chain is Phosphate acyltransferase, found in Ehrlichia chaffeensis (strain ATCC CRL-10679 / Arkansas).